We begin with the raw amino-acid sequence, 468 residues long: Aldehyde dehydrogenase family 3 member B1 (468 aa).

Met1 carries the N-acetylmethionine modification. 188-193 (GNAYVG) is a binding site for NAD(+). Active-site residues include Glu210 and Cys244. S-palmitoyl cysteine attachment occurs at residues Cys462 and Cys463. Cys465 is modified (cysteine methyl ester). A lipid anchor (S-geranylgeranyl cysteine) is attached at Cys465. Positions 466–468 (TLL) are cleaved as a propeptide — removed in mature form.

This sequence belongs to the aldehyde dehydrogenase family. Post-translationally, dually lipidated in the C-terminus; prenylation occurs prior to, and is a prerequisite for palmitoylation. It is also required for activity towards long-chain substrates. Highly expressed in kidney and liver. In brain is expressed at moderate levels in cortex, striatum and hippocampus, and at lower levels in brainstem and cerebellum.

The protein localises to the cell membrane. The catalysed reaction is an aldehyde + NAD(+) + H2O = a carboxylate + NADH + 2 H(+). The enzyme catalyses a long-chain fatty aldehyde + NAD(+) + H2O = a long-chain fatty acid + NADH + 2 H(+). It catalyses the reaction a medium-chain fatty aldehyde + NAD(+) + H2O = a medium-chain fatty acid + NADH + 2 H(+). It carries out the reaction octanal + NAD(+) + H2O = octanoate + NADH + 2 H(+). The catalysed reaction is nonanal + NAD(+) + H2O = nonanoate + NADH + 2 H(+). The enzyme catalyses hexadecanoate + NADH + 2 H(+) = hexadecanal + NAD(+) + H2O. It catalyses the reaction (2E)-octenal + NAD(+) + H2O = (2E)-octenoate + NADH + 2 H(+). It carries out the reaction (E)-non-2-enal + NAD(+) + H2O = (E)-non-2-enoate + NADH + 2 H(+). The catalysed reaction is (E)-4-hydroxynon-2-enal + NAD(+) + H2O = (E)-4-hydroxynon-2-enoate + NADH + 2 H(+). The enzyme catalyses (2E)-hexadecenal + NAD(+) + H2O = (E)-hexadec-2-enoate + NADH + 2 H(+). It catalyses the reaction benzaldehyde + NAD(+) + H2O = benzoate + NADH + 2 H(+). It carries out the reaction an aldehyde + NADP(+) + H2O = a carboxylate + NADPH + 2 H(+). The catalysed reaction is a medium-chain fatty aldehyde + NADP(+) + H2O = a medium-chain fatty acid + NADPH + 2 H(+). The enzyme catalyses hexanal + NADP(+) + H2O = hexanoate + NADPH + 2 H(+). It catalyses the reaction octanal + NADP(+) + H2O = octanoate + NADPH + 2 H(+). It carries out the reaction nonanal + NADP(+) + H2O = nonanoate + NADPH + 2 H(+). The catalysed reaction is (2E)-octenal + NADP(+) + H2O = (2E)-octenoate + NADPH + 2 H(+). The enzyme catalyses (E)-non-2-enal + NADP(+) + H2O = (E)-non-2-enoate + NADPH + 2 H(+). It catalyses the reaction (E)-4-hydroxynon-2-enal + NADP(+) + H2O = (E)-4-hydroxynon-2-enoate + NADPH + 2 H(+). It carries out the reaction benzaldehyde + NADP(+) + H2O = benzoate + NADPH + 2 H(+). Its pathway is alcohol metabolism; ethanol degradation; acetate from ethanol: step 2/2. Functionally, oxidizes medium and long chain saturated and unsaturated fatty aldehydes generated in the plasma membrane into non-toxic fatty acids. May have a protective role against the cytotoxicity induced by lipid peroxidation. Short-chain fatty aldehydes are not good substrates. Can use both NADP(+) and NAD(+) as electron acceptor in vitro, however in vivo preference will depend on their tissue levels. Low activity towards acetaldehyde and 3,4-dihydroxyphenylacetaldehyde. Able to metabolize aromatic aldehydes such as benzaldehyde to their acid form. In Mus musculus (Mouse), this protein is Aldehyde dehydrogenase family 3 member B1 (Aldh3b1).